The sequence spans 955 residues: MVIGTPVTTPLSKIVRTPSRVPGSRRTTPSKIREEKILVTIRVRPLSPKEQAAYDLIAWDFPDEQTIVSKNLNHERHTGPYSFDYVFDPTCSTSKVYEQGARDVALSALNGINATIFAYGQTSSGKTFTMRGITESAVNDIYGRIKLTTERDFVLKFSALEIYNETVVDLLNRESVSLRLLDDPEKGVIVEKQVEEIVKDEEHLKTLIGTVEAHRQVGETALNDKSSRSHQIIRLTIESSIRENSGCVKSFLATLNLVDLAGSERASQTSADGTRLKEGSHINRSLLTVTNVIRKLSCSGGKRSGHIPYRDSKLTRILQASLGGNSRTAIICTLSPALSHLEQSRNTLCFATSAKEVTTTAQVNMVVAEKQLLKHLQKEVSRLEAELRSPDPAASPCLRSLLIEKERKIQKMEEEMNELKRQRDLAQSQLELERRSKKELKGSDHHGPSRQVVKCLSFTPEDEEVSGASLSTNLGRKSLLERQAAIRRSTNSTNPSMLVHEIRKLEMRQRQLGDEANHALQLLHKEFASHRIGSQGATETIAKLFSEIKELQKISCIPEQIEIKDKASLKEEIARLRSQESNIASLEQKLENVQRSIDELVMHLPSCHESADSRTAPSKKKRVLPFNLSNTSNIPNIIRSPCSPMSPSSCNIVEGEIENRAPPECNNVGSAGDSFCSQLSTPVKSKDDNCTPGSRQSNSVNMKKMQTMFKKAAEDNIRSIKAYVTELKERVAKLQYQKQLLVCQVLELEANEAASDEADISDQSPLSWHLVFEDQRQQIIMLWHLCHVSLVHRTQFYMLFKGDPSDQIYLEVELRRLTWLDEHLAGLGNASPALLGDDAAGYVSSSIKALKQEREYLAKRVSSKLNAEEREMLYVKWDIPPDGKQRRRLQLVNKLWSDPLNMQNVRDSAEVVAKLVGFCETGEHVSKEMFQLNFVSPSDKKTWIGWNLISNLLHL.

The region spanning 36–357 (KILVTIRVRP…LCFATSAKEV (322 aa)) is the Kinesin motor domain. Residue 120–127 (GQTSSGKT) coordinates ATP. Coiled coils occupy residues 366–443 (VVAE…LKGS) and 566–604 (KASL…VMHL).

This sequence belongs to the TRAFAC class myosin-kinesin ATPase superfamily. Kinesin family. KIN-7 subfamily.

Its subcellular location is the cytoplasm. It is found in the nucleus. It localises to the cytoskeleton. The protein localises to the phragmoplast. In terms of biological role, probable plus end-directed motor protein that may function in the NACK-PQR (NPK1-NQK1/MEK1-NRK1) MAP kinase signaling pathway, which is essential for somatic cell cytokinesis, especially for the cell-plate formation and its expansion. May regulate the activity and the localization of NPK1, probably by association through the non-catalytic region of the kinase. This is Kinesin-like protein NACK2 (NACK2) from Nicotiana tabacum (Common tobacco).